The chain runs to 208 residues: ATP-dependent Clp protease proteolytic subunit (208 aa).

The active-site Nucleophile is S101. H126 is an active-site residue.

The protein belongs to the peptidase S14 family. As to quaternary structure, component of the chloroplastic Clp protease core complex.

The protein localises to the plastid. It localises to the chloroplast stroma. The catalysed reaction is Hydrolysis of proteins to small peptides in the presence of ATP and magnesium. alpha-casein is the usual test substrate. In the absence of ATP, only oligopeptides shorter than five residues are hydrolyzed (such as succinyl-Leu-Tyr-|-NHMec, and Leu-Tyr-Leu-|-Tyr-Trp, in which cleavage of the -Tyr-|-Leu- and -Tyr-|-Trp bonds also occurs).. In terms of biological role, cleaves peptides in various proteins in a process that requires ATP hydrolysis. Has a chymotrypsin-like activity. Plays a major role in the degradation of misfolded proteins. The chain is ATP-dependent Clp protease proteolytic subunit from Nephroselmis olivacea (Green alga).